The chain runs to 524 residues: Histidine ammonia-lyase (524 aa).

Residues 139–141 (ASG) constitute a cross-link (5-imidazolinone (Ala-Gly)). Ser140 is subject to 2,3-didehydroalanine (Ser). The tract at residues 500 to 524 (ADTQAPAPAKLPDSGDEDRDTTSRH) is disordered.

The protein belongs to the PAL/histidase family. Post-translationally, contains an active site 4-methylidene-imidazol-5-one (MIO), which is formed autocatalytically by cyclization and dehydration of residues Ala-Ser-Gly.

It localises to the cytoplasm. The catalysed reaction is L-histidine = trans-urocanate + NH4(+). The protein operates within amino-acid degradation; L-histidine degradation into L-glutamate; N-formimidoyl-L-glutamate from L-histidine: step 1/3. This chain is Histidine ammonia-lyase (hutH), found in Deinococcus radiodurans (strain ATCC 13939 / DSM 20539 / JCM 16871 / CCUG 27074 / LMG 4051 / NBRC 15346 / NCIMB 9279 / VKM B-1422 / R1).